The following is a 457-amino-acid chain: tRNA-2-methylthio-N(6)-dimethylallyladenosine synthase (457 aa).

An MTTase N-terminal domain is found at 3 to 120 (KKVYVKTFGC…LPQMIDARRA (118 aa)). [4Fe-4S] cluster is bound by residues C12, C49, C83, C157, C161, and C164. A Radical SAM core domain is found at 143–377 (RVEGPSAFVS…QATIEENVAR (235 aa)). The region spanning 380-447 (QSMVGKVERI…PHSLRGELVL (68 aa)) is the TRAM domain.

The protein belongs to the methylthiotransferase family. MiaB subfamily. As to quaternary structure, monomer. It depends on [4Fe-4S] cluster as a cofactor.

Its subcellular location is the cytoplasm. The catalysed reaction is N(6)-dimethylallyladenosine(37) in tRNA + (sulfur carrier)-SH + AH2 + 2 S-adenosyl-L-methionine = 2-methylsulfanyl-N(6)-dimethylallyladenosine(37) in tRNA + (sulfur carrier)-H + 5'-deoxyadenosine + L-methionine + A + S-adenosyl-L-homocysteine + 2 H(+). Functionally, catalyzes the methylthiolation of N6-(dimethylallyl)adenosine (i(6)A), leading to the formation of 2-methylthio-N6-(dimethylallyl)adenosine (ms(2)i(6)A) at position 37 in tRNAs that read codons beginning with uridine. The protein is tRNA-2-methylthio-N(6)-dimethylallyladenosine synthase of Burkholderia cenocepacia (strain HI2424).